Here is a 266-residue protein sequence, read N- to C-terminus: Zinc transporter ZupT (266 aa).

Transmembrane regions (helical) follow at residues 8 to 28, 35 to 55, 70 to 90, 123 to 143, 152 to 172, 185 to 205, 209 to 229, and 246 to 266; these read LLLTLLAGLSTGIGSAMALVV, FLTLALGFSAGVMLYVSFVEL, QAAAWVATLAFFGGIFFIWAI, GLFTAAAIAIHNFPEGMAVFF, GIVIATTIALHNIPEGMAIAV, FTYSFLSGLAEPLGAIVGFAI, WLSPPVFGSVLAAVAGIMVYI, and LAISGLIAGMAVMALSLLLLA. Residues Asn134 and Glu137 each contribute to the Fe(2+) site. Residues Glu137 and His162 each coordinate Zn(2+). Positions 163, 166, and 195 each coordinate Fe(2+). Glu166 is a Zn(2+) binding site.

The protein belongs to the ZIP transporter (TC 2.A.5) family. ZupT subfamily.

The protein localises to the cell membrane. The catalysed reaction is Zn(2+)(in) = Zn(2+)(out). Mediates zinc uptake. May also transport other divalent cations. The polypeptide is Zinc transporter ZupT (Chlorobium phaeovibrioides (strain DSM 265 / 1930) (Prosthecochloris vibrioformis (strain DSM 265))).